The following is a 161-amino-acid chain: Phosphopantetheine adenylyltransferase (161 aa).

Serine 9 serves as a coordination point for substrate. ATP contacts are provided by residues 9–10 (SF) and histidine 17. Lysine 41, threonine 73, and arginine 87 together coordinate substrate. Residues 88–90 (GLR), glutamate 98, and 123–129 (FAHISST) each bind ATP.

Belongs to the bacterial CoaD family. In terms of assembly, homohexamer. Mg(2+) serves as cofactor.

The protein localises to the cytoplasm. It catalyses the reaction (R)-4'-phosphopantetheine + ATP + H(+) = 3'-dephospho-CoA + diphosphate. It participates in cofactor biosynthesis; coenzyme A biosynthesis; CoA from (R)-pantothenate: step 4/5. Its function is as follows. Reversibly transfers an adenylyl group from ATP to 4'-phosphopantetheine, yielding dephospho-CoA (dPCoA) and pyrophosphate. The polypeptide is Phosphopantetheine adenylyltransferase (Chloroflexus aggregans (strain MD-66 / DSM 9485)).